The following is a 439-amino-acid chain: Chromosomal replication initiator protein DnaA (439 aa).

The tract at residues 1-72 (MEQFSAFKLL…SKLYDDIRAV (72 aa)) is domain I, interacts with DnaA modulators. A domain II region spans residues 72–99 (VRFVNEQDFFINLAKLEEDNRETLYQSS). The interval 100–322 (GLSKNFTFKN…GIATKLLFYV (223 aa)) is domain III, AAA+ region. Residues glycine 144, glycine 146, lysine 147, and threonine 148 each contribute to the ATP site. Residues 323-439 (KTTKQNLINN…LQDIITSLVI (117 aa)) form a domain IV, binds dsDNA region.

The protein belongs to the DnaA family. As to quaternary structure, oligomerizes as a right-handed, spiral filament on DNA at oriC.

It localises to the cytoplasm. In terms of biological role, plays an essential role in the initiation and regulation of chromosomal replication. ATP-DnaA binds to the origin of replication (oriC) to initiate formation of the DNA replication initiation complex once per cell cycle. Binds the DnaA box (a 9 base pair repeat at the origin) and separates the double-stranded (ds)DNA. Forms a right-handed helical filament on oriC DNA; dsDNA binds to the exterior of the filament while single-stranded (ss)DNA is stabiized in the filament's interior. The ATP-DnaA-oriC complex binds and stabilizes one strand of the AT-rich DNA unwinding element (DUE), permitting loading of DNA polymerase. After initiation quickly degrades to an ADP-DnaA complex that is not apt for DNA replication. Binds acidic phospholipids. This chain is Chromosomal replication initiator protein DnaA, found in Mycoplasma pneumoniae (strain ATCC 29342 / M129 / Subtype 1) (Mycoplasmoides pneumoniae).